Here is a 245-residue protein sequence, read N- to C-terminus: Homeobox protein goosecoid (245 aa).

The segment at residues 150–209 (KRRHRTIFTDEQLEALENLFQETKYPDVGTREQLARKVHLREEKVEVWFKNRRAKWRRQK) is a DNA-binding region (homeobox). Positions 203-245 (AKWRRQKRSSSEESENAQKWNKASKTSPEKRQEDGKSDLDSDS) are disordered. Residues 219-228 (AQKWNKASKT) are compositionally biased toward polar residues. Positions 229–245 (SPEKRQEDGKSDLDSDS) are enriched in basic and acidic residues.

It belongs to the paired homeobox family. Bicoid subfamily.

The protein localises to the nucleus. In terms of biological role, involved in the development of the organizer region in the gastrula (Hensen node in chicken). The protein is Homeobox protein goosecoid (GSC) of Gallus gallus (Chicken).